The sequence spans 292 residues: Homoserine kinase (292 aa).

84–94 lines the ATP pocket; sequence PLSRGLGSSSA.

The protein belongs to the GHMP kinase family. Homoserine kinase subfamily.

Its subcellular location is the cytoplasm. The enzyme catalyses L-homoserine + ATP = O-phospho-L-homoserine + ADP + H(+). It functions in the pathway amino-acid biosynthesis; L-threonine biosynthesis; L-threonine from L-aspartate: step 4/5. Its function is as follows. Catalyzes the ATP-dependent phosphorylation of L-homoserine to L-homoserine phosphate. The chain is Homoserine kinase from Campylobacter jejuni subsp. jejuni serotype O:6 (strain 81116 / NCTC 11828).